Consider the following 469-residue polypeptide: 3-isopropylmalate dehydratase large subunit (469 aa).

[4Fe-4S] cluster-binding residues include Cys347, Cys407, and Cys410.

Belongs to the aconitase/IPM isomerase family. LeuC type 1 subfamily. Heterodimer of LeuC and LeuD. [4Fe-4S] cluster is required as a cofactor.

The enzyme catalyses (2R,3S)-3-isopropylmalate = (2S)-2-isopropylmalate. It functions in the pathway amino-acid biosynthesis; L-leucine biosynthesis; L-leucine from 3-methyl-2-oxobutanoate: step 2/4. Catalyzes the isomerization between 2-isopropylmalate and 3-isopropylmalate, via the formation of 2-isopropylmaleate. This is 3-isopropylmalate dehydratase large subunit from Photorhabdus laumondii subsp. laumondii (strain DSM 15139 / CIP 105565 / TT01) (Photorhabdus luminescens subsp. laumondii).